The chain runs to 143 residues: MVGRDIDGAETYRISELAALAGVTKRTVDYYTNLGLLTPARSCSNYRYYDENALKRLIFIVDCKKQRLALSDIKDRLENQFPSSAKLDDEIGNLALEIDHMNQNISGILHRFERLKPEDRDKLKSKLPPEKLAVFQSFMLLLS.

Residues 11–79 (TYRISELAAL…LSDIKDRLEN (69 aa)) form the HTH merR-type domain. Positions 14 to 33 (ISELAALAGVTKRTVDYYTN) form a DNA-binding region, H-T-H motif.

Transcriptional activator of the copZA operon. The chain is HTH-type transcriptional regulator CueR (cueR) from Bacillus subtilis (strain 168).